We begin with the raw amino-acid sequence, 622 residues long: Mitochondrial distribution and morphology protein 34 (622 aa).

The region spanning 1-204 (MSFKVNWNSL…LPTLIHQLSL (204 aa)) is the SMP-LTD domain. 2 disordered regions span residues 362–399 (YSNKDAPTKPKRRRIKVHKKNKSKHDETTTTTSKPSEL) and 568–592 (FDGGKNNNTNDNNSKNFRPGFTRNE). Over residues 370–384 (KPKRRRIKVHKKNKS) the composition is skewed to basic residues. Residues 390 to 399 (TTTTSKPSEL) are compositionally biased toward polar residues. Over residues 571–583 (GKNNNTNDNNSKN) the composition is skewed to low complexity.

Belongs to the MDM34 family. In terms of assembly, component of the ER-mitochondria encounter structure (ERMES) or MDM complex, composed of MMM1, MDM10, MDM12 and MDM34.

Its subcellular location is the mitochondrion outer membrane. In terms of biological role, component of the ERMES/MDM complex, which serves as a molecular tether to connect the endoplasmic reticulum (ER) and mitochondria. Components of this complex are involved in the control of mitochondrial shape and protein biogenesis, and function in nonvesicular lipid trafficking between the ER and mitochondria. MDM34 is required for the interaction of the ER-resident membrane protein MMM1 and the outer mitochondrial membrane-resident beta-barrel protein MDM10. The protein is Mitochondrial distribution and morphology protein 34 of Candida dubliniensis (strain CD36 / ATCC MYA-646 / CBS 7987 / NCPF 3949 / NRRL Y-17841) (Yeast).